A 226-amino-acid polypeptide reads, in one-letter code: Late protein I226R (226 aa).

Residues 1–16 (MKMETFLVCLFHNADG) form the signal peptide. 2 N-linked (GlcNAc...) asparagine; by host glycosylation sites follow: asparagine 142 and asparagine 164.

It belongs to the asfivirus I226R family.

In terms of biological role, plays a role in the inhibition of host NF-kappa-B and IRF3 signaling pathways. Mechanistically, promotes the degradation of host IKBKG through enhancing its ubiquitination leading to inhibition of both pathways. The chain is Late protein I226R from African swine fever virus (isolate Tick/South Africa/Pretoriuskop Pr4/1996) (ASFV).